The primary structure comprises 323 residues: MSPHKIPEVHRHIMSSRYMEGNAVSIINMPFSGGQPKDGAELAPEMIEAAGLPEDLERLGYSVNVVQNPKFKSRPLKEGPNQALMKNPLYVSNVTRQVRNIVQQELEKQRIAVNIGGDHSLAIGTVEGVQAVYDDACVLWIDAHADINTPDSSPSKNLHGCPLSFSLGYAEPLPEEFAWTRRVIEERRLAFIGLRDLDPMERAFLRERSITAYTMHDVDKYGIARVVEMALEHINPGRRRPIHLSFDVDACDPIVAPATGTRVPGGLTFREAMYICESVAETGSLVAVDVMEVNPLLGNKEEAKTTVDLARSIVRTCLGQTLL.

Mn(2+) contacts are provided by His-119, Asp-142, His-144, and Asp-146. Residues 144–148, 155–157, and Asp-198 contribute to the substrate site; these read HADIN and SKN. 2 residues coordinate Mn(2+): Asp-247 and Asp-249. Substrate-binding residues include Thr-261 and Glu-292.

It belongs to the arginase family. As to quaternary structure, homotrimer. It depends on Mn(2+) as a cofactor.

It carries out the reaction L-arginine + H2O = urea + L-ornithine. It participates in nitrogen metabolism; urea cycle; L-ornithine and urea from L-arginine: step 1/1. The sequence is that of Arginase (car1) from Schizosaccharomyces pombe (strain 972 / ATCC 24843) (Fission yeast).